A 170-amino-acid chain; its full sequence is Flavodoxin (170 aa).

Residues 4–165 enclose the Flavodoxin-like domain; that stretch reads IGLFYGTQTG…RIKTWVSQLK (162 aa).

This sequence belongs to the flavodoxin family. Requires FMN as cofactor.

Functionally, low-potential electron donor to a number of redox enzymes. The polypeptide is Flavodoxin (isiB) (Synechococcus elongatus (strain ATCC 33912 / PCC 7942 / FACHB-805) (Anacystis nidulans R2)).